Here is a 251-residue protein sequence, read N- to C-terminus: Hydroxyacylglutathione hydrolase (251 aa).

7 residues coordinate Zn(2+): His-53, His-55, Asp-57, His-58, His-110, Asp-127, and His-165.

The protein belongs to the metallo-beta-lactamase superfamily. Glyoxalase II family. In terms of assembly, monomer. The cofactor is Zn(2+).

The enzyme catalyses an S-(2-hydroxyacyl)glutathione + H2O = a 2-hydroxy carboxylate + glutathione + H(+). The protein operates within secondary metabolite metabolism; methylglyoxal degradation; (R)-lactate from methylglyoxal: step 2/2. Thiolesterase that catalyzes the hydrolysis of S-D-lactoyl-glutathione to form glutathione and D-lactic acid. This is Hydroxyacylglutathione hydrolase from Blochmanniella pennsylvanica (strain BPEN).